We begin with the raw amino-acid sequence, 198 residues long: Protein GrpE (198 aa).

Belongs to the GrpE family. As to quaternary structure, homodimer.

It localises to the cytoplasm. Its function is as follows. Participates actively in the response to hyperosmotic and heat shock by preventing the aggregation of stress-denatured proteins, in association with DnaK and GrpE. It is the nucleotide exchange factor for DnaK and may function as a thermosensor. Unfolded proteins bind initially to DnaJ; upon interaction with the DnaJ-bound protein, DnaK hydrolyzes its bound ATP, resulting in the formation of a stable complex. GrpE releases ADP from DnaK; ATP binding to DnaK triggers the release of the substrate protein, thus completing the reaction cycle. Several rounds of ATP-dependent interactions between DnaJ, DnaK and GrpE are required for fully efficient folding. The protein is Protein GrpE of Baumannia cicadellinicola subsp. Homalodisca coagulata.